Consider the following 613-residue polypeptide: Proton myo-inositol cotransporter hmit-1.2 (613 aa).

Residues 1-21 (MVAVEFKVSESGRPRPEKNPK) lie on the Cytoplasmic side of the membrane. Residues 22–42 (LGFFVYLLGSAAIIGGFLFGY) form a helical membrane-spanning segment. Topologically, residues 43 to 69 (DTSVVSAAMLYVPEAPGLKPMGTVWKE) are extracellular. The helical transmembrane segment at 70 to 90 (VIVSITPGMAAVGAWFSGAGS) threads the bilayer. The Cytoplasmic portion of the chain corresponds to 91–96 (DRYGRK). A helical membrane pass occupies residues 97–117 (PIIIGSTLIFVCGAVICAVAW). At 118-119 (TK) the chain is on the extracellular side. Residues 120–140 (IVMLIGRIFLGVGIGFASMVV) form a helical membrane-spanning segment. Residues 141 to 157 (PVYLGEASPTHVRGTLV) lie on the Cytoplasmic side of the membrane. Residues 158 to 178 (SAFAMMISFGQVVANIMGGVF) form a helical membrane-spanning segment. Topologically, residues 179-189 (SYWEPYTIGWR) are extracellular. Residues 190 to 210 (LMFAFAGIPALIQFVCFIFLP) traverse the membrane as a helical segment. The Cytoplasmic segment spans residues 211 to 279 (ETPRWLYENG…RILKTPHVLK (69 aa)). The helical transmembrane segment at 280–300 (ACFIGSMLQAFQQLAGINTIL) threads the bilayer. Topologically, residues 301–317 (YYTADIIRSAGIENYHT) are extracellular. The chain crosses the membrane as a helical span at residues 318 to 338 (IIWISVILSICNLIGPFAPMF). Residues 339 to 347 (FIEKLGRRK) are Cytoplasmic-facing. Residues 348–368 (LFLFSCAGVVVSLVLIGVSFL) form a helical membrane-spanning segment. Residues 369–472 (LVGNDSAPNF…QKHHCTTSYT (104 aa)) are Extracellular-facing. N-linked (GlcNAc...) asparagine glycosylation is found at Asn372, Asn451, and Asn456. A helical membrane pass occupies residues 473–493 (ILPIVMMGVYLLTFSCGFTSL). The Cytoplasmic portion of the chain corresponds to 494–515 (PWVLNSEFYPMWARSTCVSIST). Residues 516 to 536 (LSNWVFNLIIALTYLSLTHAI) form a helical membrane-spanning segment. At 537–539 (TKY) the chain is on the extracellular side. Residues 540–560 (GAFWLYAIFTIIAFIFIYFLV) form a helical membrane-spanning segment. Over 561–613 (PETTGYSIDEVEMLFMNKRQRNIAMQARQAKLDAASDKDKNSSTSLSTETITM) the chain is Cytoplasmic. The disordered stretch occupies residues 594-613 (AASDKDKNSSTSLSTETITM). Residues 602–613 (SSTSLSTETITM) show a composition bias toward polar residues.

It belongs to the major facilitator superfamily. Sugar transporter (TC 2.A.1.1) family. In terms of tissue distribution, expressed in the excretory canal cell and in pairs of amphid and sheath glia.

Its subcellular location is the cell membrane. The protein resides in the perikaryon. It carries out the reaction myo-inositol(out) + H(+)(out) = myo-inositol(in) + H(+)(in). Its function is as follows. H(+)-myo-inositol cotransporter. Probably by promoting the transport of myo-inositol regulates intracellular osmosis in response to hyperosmotic stress. This is Proton myo-inositol cotransporter hmit-1.2 from Caenorhabditis elegans.